Here is a 535-residue protein sequence, read N- to C-terminus: Secreted lipase 5 (535 aa).

An N-terminal signal peptide occupies residues 1–17; sequence MHLKSLLLAALPLLLEA. Asn32 and Asn119 each carry an N-linked (GlcNAc...) asparagine glycan. Ser241 (acyl-ester intermediate) is an active-site residue. N-linked (GlcNAc...) asparagine glycans are attached at residues Asn282, Asn341, Asn347, and Asn432.

Belongs to the type-B carboxylesterase/lipase family.

The protein localises to the secreted. The catalysed reaction is a carboxylic ester + H2O = an alcohol + a carboxylate + H(+). Its function is as follows. Secreted lipase involved in plant virulence. Has a substrate preference for p-nitrophenyl esters with a carbon chain length of C8 (p-nitrophenyl caprylate). The polypeptide is Secreted lipase 5 (Gibberella zeae (strain ATCC MYA-4620 / CBS 123657 / FGSC 9075 / NRRL 31084 / PH-1) (Wheat head blight fungus)).